The chain runs to 241 residues: Ribosome-recycling factor, mitochondrial (241 aa).

The protein belongs to the RRF family.

Its subcellular location is the mitochondrion. Functionally, necessary for protein synthesis in mitochondria. Functions as a ribosome recycling factor in mitochondria. The polypeptide is Ribosome-recycling factor, mitochondrial (RRF1) (Kluyveromyces lactis (strain ATCC 8585 / CBS 2359 / DSM 70799 / NBRC 1267 / NRRL Y-1140 / WM37) (Yeast)).